The primary structure comprises 366 residues: Chorismate synthase (366 aa).

Residues arginine 48 and arginine 54 each contribute to the NADP(+) site. Residues 132–134 (RSS), 244–245 (NA), glycine 289, 304–308 (KPTSS), and arginine 330 contribute to the FMN site.

This sequence belongs to the chorismate synthase family. In terms of assembly, homotetramer. FMNH2 is required as a cofactor.

The catalysed reaction is 5-O-(1-carboxyvinyl)-3-phosphoshikimate = chorismate + phosphate. Its pathway is metabolic intermediate biosynthesis; chorismate biosynthesis; chorismate from D-erythrose 4-phosphate and phosphoenolpyruvate: step 7/7. Catalyzes the anti-1,4-elimination of the C-3 phosphate and the C-6 proR hydrogen from 5-enolpyruvylshikimate-3-phosphate (EPSP) to yield chorismate, which is the branch point compound that serves as the starting substrate for the three terminal pathways of aromatic amino acid biosynthesis. This reaction introduces a second double bond into the aromatic ring system. This is Chorismate synthase from Methylorubrum populi (strain ATCC BAA-705 / NCIMB 13946 / BJ001) (Methylobacterium populi).